Reading from the N-terminus, the 729-residue chain is Glycine--tRNA ligase, mitochondrial 1 (729 aa).

At M1 the chain carries N-acetylmethionine. A mitochondrion-targeting transit peptide spans 1–28 (MRIFSTFVFHRRQQIFNLRQFQTTTILR). Residues 50–106 (SLSEKSSSVEAQGNAVRALKASRAAKPEIDAAIEQLNKLKLEKSTVEKELQSIISSS) enclose the WHEP-TRS domain. A glycine-binding site is contributed by E296. ATP is bound by residues 328-330 (RNE) and 339-340 (RV). E347 provides a ligand contact to glycine. 454-455 (EC) is an ATP binding site. Glycine is bound at residue 575–577 (EPS). R582 serves as a coordination point for ATP.

It belongs to the class-II aminoacyl-tRNA synthetase family. Homodimer.

It is found in the mitochondrion. The protein resides in the cytoplasm. It localises to the cytosol. The enzyme catalyses tRNA(Gly) + glycine + ATP = glycyl-tRNA(Gly) + AMP + diphosphate. It carries out the reaction 2 ATP + H(+) = P(1),P(4)-bis(5'-adenosyl) tetraphosphate + diphosphate. Its function is as follows. Catalyzes the ATP-dependent ligation of glycine to the 3'-end of its cognate tRNA, via the formation of an aminoacyl-adenylate intermediate (Gly-AMP). Also produces diadenosine tetraphosphate (Ap4A), a universal pleiotropic signaling molecule needed for cell regulation pathways, by direct condensation of 2 ATPs. Thereby, may play a special role in Ap4A homeostasis. The protein is Glycine--tRNA ligase, mitochondrial 1 of Arabidopsis thaliana (Mouse-ear cress).